A 619-amino-acid polypeptide reads, in one-letter code: 1-deoxy-D-xylulose-5-phosphate synthase (619 aa).

Residues His-80 and 121–123 (GHS) contribute to the thiamine diphosphate site. Residue Asp-152 coordinates Mg(2+). Thiamine diphosphate is bound by residues 153–154 (GA), Asn-181, Tyr-288, and Glu-370. Asn-181 is a binding site for Mg(2+).

The protein belongs to the transketolase family. DXPS subfamily. Homodimer. Requires Mg(2+) as cofactor. The cofactor is thiamine diphosphate.

The catalysed reaction is D-glyceraldehyde 3-phosphate + pyruvate + H(+) = 1-deoxy-D-xylulose 5-phosphate + CO2. Its pathway is metabolic intermediate biosynthesis; 1-deoxy-D-xylulose 5-phosphate biosynthesis; 1-deoxy-D-xylulose 5-phosphate from D-glyceraldehyde 3-phosphate and pyruvate: step 1/1. Catalyzes the acyloin condensation reaction between C atoms 2 and 3 of pyruvate and glyceraldehyde 3-phosphate to yield 1-deoxy-D-xylulose-5-phosphate (DXP). The sequence is that of 1-deoxy-D-xylulose-5-phosphate synthase from Yersinia pseudotuberculosis serotype O:3 (strain YPIII).